We begin with the raw amino-acid sequence, 262 residues long: Small ribosomal subunit protein mS23 (262 aa).

The tract at residues 211-262 (SGQSDEAPEGEGSDMSAGEYDMAVEELAGQGSIPNTPQSTVVPEGTSAPAHA) is disordered. Polar residues predominate over residues 242 to 251 (SIPNTPQSTV).

This sequence belongs to the mitochondrion-specific ribosomal protein mS23 family. In terms of assembly, component of the mitochondrial small ribosomal subunit.

It localises to the mitochondrion. The chain is Small ribosomal subunit protein mS23 (RSM25) from Phaeosphaeria nodorum (strain SN15 / ATCC MYA-4574 / FGSC 10173) (Glume blotch fungus).